The sequence spans 883 residues: Coatomer subunit gamma (883 aa).

Positions 1–25 are disordered; it reads MNYFSLTSHKKHRGHPSAGPSNAYQ. HEAT repeat units follow at residues 69–106, 292–329, 331–364, 365–401, 404–439, and 476–513; these read REATDCFFAMTKLFQSKDVVLRRMVYLGIKELSSIAED, RMLSPAFSILQLFCSSPKATLRFAAVRTLNKVAMTHPA, VTTCNLDLEGLITDSNRSVATLAITTLLKTGAES, SVERLMKQISTFVAEISDEFKVVVVQAICALCTKYPR, TVLMNFLSGMLREEGGLEYKTSIVDTIITIIEENAD, and ATPSKYIRFIYNRVILESPIVRAAAVTAMAQFGASCPA.

The protein belongs to the COPG family. Oligomeric complex that consists of at least the alpha, beta, beta', gamma, delta, epsilon and zeta subunits. As to expression, expressed in ovary, testis, testis tip, young spermatocytes, germ cells and follicle cells. Up-regulated expression within centrally to posteriorly located germarial cysts and in migrating follicle cells. Widespread expression in imaginal disks including eye-antennal disk, wing disk, third leg and haltere disk.

The protein resides in the cytoplasm. It is found in the golgi apparatus membrane. It localises to the cytoplasmic vesicle. Its subcellular location is the COPI-coated vesicle membrane. The protein localises to the endoplasmic reticulum. In terms of biological role, the coatomer is a cytosolic protein complex that binds to dilysine motifs and reversibly associates with Golgi non-clathrin-coated vesicles, which further mediate biosynthetic protein transport from the ER, via the Golgi up to the trans Golgi network. Coatomer complex is required for budding from Golgi membranes, and is essential for the retrograde Golgi-to-ER transport of dilysine-tagged proteins. Required for limiting lipid storage in lipid droplets. Involved in the expansion of luminal extracellular matrices and apical membrane during tubulogenesis. Required in the tracheal epithelium for luminal protein secretion and diametric tube growth. In salivary glands, required for deposition of O-glycans and luminal extracellular matrix assembly. Required for epidermal morphogenesis and cuticle development. This Drosophila melanogaster (Fruit fly) protein is Coatomer subunit gamma.